The following is a 129-amino-acid chain: Large ribosomal subunit protein bL21 (129 aa).

It belongs to the bacterial ribosomal protein bL21 family. As to quaternary structure, part of the 50S ribosomal subunit. Contacts protein L20.

This protein binds to 23S rRNA in the presence of protein L20. The protein is Large ribosomal subunit protein bL21 of Prochlorococcus marinus (strain MIT 9313).